Reading from the N-terminus, the 466-residue chain is Alpha-1A adrenergic receptor (466 aa).

Over 1–27 the chain is Extracellular; sequence MVFLSGNASDSSNCTHPPPPVNISKAI. N-linked (GlcNAc...) asparagine glycans are attached at residues Asn-7, Asn-13, and Asn-22. The helical transmembrane segment at 28 to 51 threads the bilayer; that stretch reads LLGVILGGLILFGVLGNILVILSV. The Cytoplasmic portion of the chain corresponds to 52–64; that stretch reads ACHRHLHSVTHYY. Residues 65–88 traverse the membrane as a helical segment; sequence IVNLAVADLLLTSTVLPFSAIFEI. Topologically, residues 89–99 are extracellular; sequence LGYWAFGRVFC. The cysteines at positions 99 and 176 are disulfide-linked. The helical transmembrane segment at 100–122 threads the bilayer; that stretch reads NVWAAVDVLCCTASIMGLCIISI. Over 123–143 the chain is Cytoplasmic; sequence DRYIGVSYPLRYPTIVTQKRG. Residues 144–167 form a helical membrane-spanning segment; the sequence is LMALLCVWALSLVISIGPLFGWRQ. Residues 168-181 are Extracellular-facing; that stretch reads PAPEDETICQINEE. The chain crosses the membrane as a helical span at residues 182–205; it reads PGYVLFSALGSFYVPLTIILVMYC. The Cytoplasmic portion of the chain corresponds to 206–273; the sequence is RVYVVAKRES…FSREKKAAKT (68 aa). Ser-215 is modified (phosphoserine; by PKA). Residues 274–297 form a helical membrane-spanning segment; sequence LGIVVGCFVLCWLPFFLVMPIGSF. Over 298–305 the chain is Extracellular; the sequence is FPDFRPSE. A helical transmembrane segment spans residues 306-329; the sequence is TVFKIAFWLGYLNSCINPIIYPCS. Residues 330 to 466 are Cytoplasmic-facing; that stretch reads SQEFKKAFQN…ISLSENGEEV (137 aa). Positions 334–349 match the Nuclear localization signal motif; that stretch reads KKAFQNVLRIQCLRRK. Cys-345 carries the S-palmitoyl cysteine lipid modification.

This sequence belongs to the G-protein coupled receptor 1 family. Adrenergic receptor subfamily. ADRA1A sub-subfamily. Homo- and heterooligomer. Heterooligomerizes with ADRA1B homooligomers in cardiac myocytes. Interacts with CAVIN4.

The protein localises to the nucleus membrane. It is found in the cell membrane. The protein resides in the cytoplasm. Its subcellular location is the membrane. It localises to the caveola. This alpha-adrenergic receptor mediates its action by association with G proteins that activate a phosphatidylinositol-calcium second messenger system. Its effect is mediated by G(q) and G(11) proteins. Nuclear ADRA1A-ADRA1B heterooligomers regulate phenylephrine (PE)-stimulated ERK signaling in cardiac myocytes. The chain is Alpha-1A adrenergic receptor (ADRA1A) from Bos taurus (Bovine).